The primary structure comprises 337 residues: Fructose-1,6-bisphosphatase class 1 (337 aa).

4 residues coordinate Mg(2+): Glu94, Asp116, Leu118, and Asp119. Substrate-binding positions include 119-122, Asn210, and Lys276; that span reads DGSS. Residue Glu282 participates in Mg(2+) binding.

This sequence belongs to the FBPase class 1 family. As to quaternary structure, homotetramer. Requires Mg(2+) as cofactor.

It is found in the cytoplasm. It carries out the reaction beta-D-fructose 1,6-bisphosphate + H2O = beta-D-fructose 6-phosphate + phosphate. Its pathway is carbohydrate biosynthesis; gluconeogenesis. This chain is Fructose-1,6-bisphosphatase class 1, found in Burkholderia lata (strain ATCC 17760 / DSM 23089 / LMG 22485 / NCIMB 9086 / R18194 / 383).